The following is a 367-amino-acid chain: CST complex subunit STN1 (367 aa).

Positions 56–154 (VEILGTVIGR…EIRVTTYYKV (99 aa)) form a DNA-binding region, OB. Winged helix-turn-helix (wHTH) stretches follow at residues 190–294 (RAFS…YVTR) and 295–367 (EDKE…YTAF).

This sequence belongs to the STN1 family. As to quaternary structure, component of the CST complex, composed of TEN1, CTC1 and STN1. Interacts with TEN1 and CTC1; the interaction is direct. Interacts with ACD/TPP1.

It localises to the nucleus. The protein localises to the chromosome. The protein resides in the telomere. Functionally, component of the CST complex, a complex that binds to single-stranded DNA and is required to protect telomeres from DNA degradation. The CST complex binds single-stranded DNA with high affinity in a sequence-independent manner, while isolated subunits bind DNA with low affinity by themselves. In addition to telomere protection, the CST complex has probably a more general role in DNA metabolism at non-telomeric sites. The protein is CST complex subunit STN1 of Ailuropoda melanoleuca (Giant panda).